Reading from the N-terminus, the 581-residue chain is Probable peptidoglycan D,D-transpeptidase PenA (581 aa).

Residues 28–48 (ISFVLMAIAVLFAGLIARGLY) form a helical membrane-spanning segment. Catalysis depends on S310, which acts as the Acyl-ester intermediate.

It belongs to the transpeptidase family. FtsI subfamily.

Its subcellular location is the cell inner membrane. It carries out the reaction Preferential cleavage: (Ac)2-L-Lys-D-Ala-|-D-Ala. Also transpeptidation of peptidyl-alanyl moieties that are N-acyl substituents of D-alanine.. It functions in the pathway cell wall biogenesis; peptidoglycan biosynthesis. In terms of biological role, catalyzes cross-linking of the peptidoglycan cell wall at the division septum. The polypeptide is Probable peptidoglycan D,D-transpeptidase PenA (Neisseria meningitidis serogroup A / serotype 4A (strain DSM 15465 / Z2491)).